Reading from the N-terminus, the 157-residue chain is SsrA-binding protein (157 aa).

The protein belongs to the SmpB family.

It localises to the cytoplasm. Its function is as follows. Required for rescue of stalled ribosomes mediated by trans-translation. Binds to transfer-messenger RNA (tmRNA), required for stable association of tmRNA with ribosomes. tmRNA and SmpB together mimic tRNA shape, replacing the anticodon stem-loop with SmpB. tmRNA is encoded by the ssrA gene; the 2 termini fold to resemble tRNA(Ala) and it encodes a 'tag peptide', a short internal open reading frame. During trans-translation Ala-aminoacylated tmRNA acts like a tRNA, entering the A-site of stalled ribosomes, displacing the stalled mRNA. The ribosome then switches to translate the ORF on the tmRNA; the nascent peptide is terminated with the 'tag peptide' encoded by the tmRNA and targeted for degradation. The ribosome is freed to recommence translation, which seems to be the essential function of trans-translation. This Clostridium kluyveri (strain NBRC 12016) protein is SsrA-binding protein.